We begin with the raw amino-acid sequence, 208 residues long: Imidazole glycerol phosphate synthase subunit HisH (208 aa).

The Glutamine amidotransferase type-1 domain maps to 1-206; it reads MIVIIDYDTG…KEVTYSCKSS (206 aa). The active-site Nucleophile is the Cys-79. Catalysis depends on residues His-181 and Glu-183.

Heterodimer of HisH and HisF.

The protein localises to the cytoplasm. It catalyses the reaction 5-[(5-phospho-1-deoxy-D-ribulos-1-ylimino)methylamino]-1-(5-phospho-beta-D-ribosyl)imidazole-4-carboxamide + L-glutamine = D-erythro-1-(imidazol-4-yl)glycerol 3-phosphate + 5-amino-1-(5-phospho-beta-D-ribosyl)imidazole-4-carboxamide + L-glutamate + H(+). The catalysed reaction is L-glutamine + H2O = L-glutamate + NH4(+). The protein operates within amino-acid biosynthesis; L-histidine biosynthesis; L-histidine from 5-phospho-alpha-D-ribose 1-diphosphate: step 5/9. Its function is as follows. IGPS catalyzes the conversion of PRFAR and glutamine to IGP, AICAR and glutamate. The HisH subunit catalyzes the hydrolysis of glutamine to glutamate and ammonia as part of the synthesis of IGP and AICAR. The resulting ammonia molecule is channeled to the active site of HisF. In Listeria monocytogenes serotype 4a (strain HCC23), this protein is Imidazole glycerol phosphate synthase subunit HisH.